Here is an 89-residue protein sequence, read N- to C-terminus: Barrier-to-autointegration factor 1 (89 aa).

The protein belongs to the BAF family. In terms of assembly, interacts with emr-1 and lem-2. Interacts with lem-4l, leading to decreased phosphorylation by VRK1 and promoting dephosphorylation by protein phosphatase 2A (PP2A). Phosphorylated by vrk-1. Phosphorylation by vrk-1 in mitosis is essential to achieve correct timing of recruitment of nuclear envelope components during nuclear envelope assembly. Dephosphorylated by protein phosphatase 2A (PP2A) following interaction with lem-4l during mitotic exit, leading to mitotic nuclear envelope reassembly.

It is found in the nucleus. Its function is as follows. DNA-binding protein which plays an essential role in nuclear envelope formation. Required for normal chromosome segregation during mitosis. Associates with the nuclear lamina via its interaction with LEM domain containing proteins emr-1 and lem-2. In association with lem-3, plays a role in radiation-induced DNA damage repair response. This chain is Barrier-to-autointegration factor 1 (baf-1), found in Caenorhabditis elegans.